We begin with the raw amino-acid sequence, 340 residues long: CRISPR-associated protein Cas7 (340 aa).

Component of the Cascade-like complex (Cascade I-B), composed of Cas5, Cas6, Cas7 and crRNA.

The protein resides in the cytoplasm. Its function is as follows. CRISPR (clustered regularly interspaced short palindromic repeat) is an adaptive immune system that provides protection against mobile genetic elements (viruses, transposable elements and conjugative plasmids). CRISPR clusters contain sequences complementary to antecedent mobile elements and target invading nucleic acids. CRISPR clusters are transcribed and processed into CRISPR RNA (crRNA). Plasmid targeted by CRISPR locus P1 transform wild-type cells very poorly. This protein helps process or stabilize pre-crRNA into individual crRNA units, in vivo Cas6 and Cas7 are also required for optimal crRNA processing and/or stability. This is CRISPR-associated protein Cas7 from Haloferax volcanii (strain ATCC 29605 / DSM 3757 / JCM 8879 / NBRC 14742 / NCIMB 2012 / VKM B-1768 / DS2) (Halobacterium volcanii).